A 331-amino-acid polypeptide reads, in one-letter code: Heat-inducible transcription repressor HrcA (331 aa).

Belongs to the HrcA family.

Negative regulator of class I heat shock genes (grpE-dnaK-dnaJ and groELS operons). Prevents heat-shock induction of these operons. In Synechococcus sp. (strain WH7803), this protein is Heat-inducible transcription repressor HrcA.